A 129-amino-acid polypeptide reads, in one-letter code: Small ribosomal subunit protein uS11 (129 aa).

Belongs to the universal ribosomal protein uS11 family. Part of the 30S ribosomal subunit. Interacts with proteins S7 and S18. Binds to IF-3.

In terms of biological role, located on the platform of the 30S subunit, it bridges several disparate RNA helices of the 16S rRNA. Forms part of the Shine-Dalgarno cleft in the 70S ribosome. In Lawsonia intracellularis (strain PHE/MN1-00), this protein is Small ribosomal subunit protein uS11.